The primary structure comprises 848 residues: Aryl hydrocarbon receptor (848 aa).

An N-acetylmethionine modification is found at M1. Residues 1–10 constitute a propeptide that is removed on maturation; it reads MNSSSANITY. The span at 1 to 10 shows a compositional bias: polar residues; it reads MNSSSANITY. The segment at 1–39 is disordered; that stretch reads MNSSSANITYASRKRRKPVQKTVKPIPAEGIKSNPSKRH. 2 short sequence motifs (nuclear localization signal) span residues 13 to 16 and 37 to 42; these read RKRR and KRHRDR. A bHLH domain is found at 27–80; the sequence is PAEGIKSNPSKRHRDRLNTELDRLASLLPFPQDVINKLDKLSVLRLSVSYLRAK. A DNA-binding region spans residues 38–66; it reads RHRDRLNTELDRLASLLPFPQDVINKLDK. 3 required for maintaining the overall integrity of the AHR:ARNT heterodimer and its transcriptional activity regions span residues 50-82, 118-126, and 266-268; these read LASL…AKSF, LLQALNGFV, and FAI. Residues 64–72 carry the Nuclear export signal motif; it reads LDKLSVLRL. The region spanning 111 to 181 is the PAS 1 domain; sequence NLQEGEFLLQ…RQLHWALNPS (71 aa). The region spanning 275–342 is the PAS 2 domain; that stretch reads PSILEIRTKN…CAESHIRMIK (68 aa). The PAC domain maps to 348 to 386; the sequence is MIVFRLLTKNNRWTWVQSNARLLYKNGRPDYIIVTQRPL. The segment at 824-848 is disordered; the sequence is TTHLQPLHHPSEARPFPDLTSSGFL.

In terms of assembly, homodimer. Heterodimer; efficient DNA binding requires dimerization with another bHLH protein. Interacts with ARNT; the heterodimer ARNT:AHR binds to core DNA sequence 5'-TGCGTG-3' within the dioxin response element (DRE) of target gene promoters and activates their transcription. Binds MYBBP1A. Interacts with coactivators including SRC-1, RIP140 and NOCA7, and with the corepressor SMRT. Interacts with NEDD8 and IVNS1ABP. Interacts with BMAL1. Interacts with HSP90AB1. Interacts with TIPARP; leading to mono-ADP-ribosylation of AHR and subsequent inhibition of AHR. Mono-ADP-ribosylated, leading to inhibit transcription activator activity of AHR. In terms of tissue distribution, expressed in all tissues tested including blood, brain, heart, kidney, liver, lung, pancreas and skeletal muscle. Expressed in retinal photoreceptors.

The protein resides in the cytoplasm. It is found in the nucleus. Functionally, ligand-activated transcription factor that enables cells to adapt to changing conditions by sensing compounds from the environment, diet, microbiome and cellular metabolism, and which plays important roles in development, immunity and cancer. Upon ligand binding, translocates into the nucleus, where it heterodimerizes with ARNT and induces transcription by binding to xenobiotic response elements (XRE). Regulates a variety of biological processes, including angiogenesis, hematopoiesis, drug and lipid metabolism, cell motility and immune modulation. Xenobiotics can act as ligands: upon xenobiotic-binding, activates the expression of multiple phase I and II xenobiotic chemical metabolizing enzyme genes (such as the CYP1A1 gene). Mediates biochemical and toxic effects of halogenated aromatic hydrocarbons. Next to xenobiotics, natural ligands derived from plants, microbiota, and endogenous metabolism are potent AHR agonists. Tryptophan (Trp) derivatives constitute an important class of endogenous AHR ligands. Acts as a negative regulator of anti-tumor immunity: indoles and kynurenic acid generated by Trp catabolism act as ligand and activate AHR, thereby promoting AHR-driven cancer cell motility and suppressing adaptive immunity. Regulates the circadian clock by inhibiting the basal and circadian expression of the core circadian component PER1. Inhibits PER1 by repressing the CLOCK-BMAL1 heterodimer mediated transcriptional activation of PER1. The heterodimer ARNT:AHR binds to core DNA sequence 5'-TGCGTG-3' within the dioxin response element (DRE) of target gene promoters and activates their transcription. This is Aryl hydrocarbon receptor from Homo sapiens (Human).